The sequence spans 183 residues: Adenine phosphoribosyltransferase (183 aa).

This sequence belongs to the purine/pyrimidine phosphoribosyltransferase family. In terms of assembly, homodimer.

It localises to the cytoplasm. It catalyses the reaction AMP + diphosphate = 5-phospho-alpha-D-ribose 1-diphosphate + adenine. It functions in the pathway purine metabolism; AMP biosynthesis via salvage pathway; AMP from adenine: step 1/1. In terms of biological role, catalyzes a salvage reaction resulting in the formation of AMP, that is energically less costly than de novo synthesis. The polypeptide is Adenine phosphoribosyltransferase (Blochmanniella floridana).